The primary structure comprises 341 residues: Heme A synthase (341 aa).

The next 8 helical transmembrane spans lie at 7–27, 92–112, 118–138, 159–179, 190–210, 253–273, 280–300, and 302–322; these read VTVWLGVCCSMTLLMVVIGGI, LFGRALGAVFCLPIPYFAITK, MVAKLLMVALLGGMQGAMGWF, LFLTILLFSILWHSFLRCAGV, FFTAAAVVGLTVLQMVLGALV, FLHRLVAVLIVVCAAPLPFWL, LFLACVALQFLLGVATLVSVV, and IFLAAMHQVFGFVTLAAGVHM. Residue H255 participates in heme binding. Residue H308 participates in heme binding.

The protein belongs to the COX15/CtaA family. Type 2 subfamily. Interacts with CtaB. Requires heme b as cofactor.

The protein resides in the cell membrane. The enzyme catalyses Fe(II)-heme o + 2 A + H2O = Fe(II)-heme a + 2 AH2. It participates in porphyrin-containing compound metabolism; heme A biosynthesis; heme A from heme O: step 1/1. In terms of biological role, catalyzes the conversion of heme O to heme A by two successive hydroxylations of the methyl group at C8. The first hydroxylation forms heme I, the second hydroxylation results in an unstable dihydroxymethyl group, which spontaneously dehydrates, resulting in the formyl group of heme A. This is Heme A synthase from Anaplasma marginale (strain Florida).